The following is a 348-amino-acid chain: Rhodopsin (348 aa).

Met1 bears the N-acetylmethionine mark. Residues 1–36 (MNGTEGPNFYVPFSNKTGVVRSPFEYPQYYLAEPWQ) lie on the Extracellular side of the membrane. N-linked (GlcNAc...) asparagine glycosylation is found at Asn2 and Asn15. Residues 37–61 (FSMLAAYMFLLIVLGFPINFLTLYV) form a helical membrane-spanning segment. Residues 62–73 (TVQHKNVRTPLN) lie on the Cytoplasmic side of the membrane. The chain crosses the membrane as a helical span at residues 74 to 96 (YILLNLAVANHFMVFGGFTTTLY). Topologically, residues 97–110 (TSLHGYFVFGSTGC) are extracellular. Cysteines 110 and 187 form a disulfide. A helical membrane pass occupies residues 111 to 133 (NLEGFFATLGGEIALWSLVVLAI). The 'Ionic lock' involved in activated form stabilization signature appears at 134 to 136 (ERY). Residues 134 to 152 (ERYVVVCKPMSNFRFGENH) lie on the Cytoplasmic side of the membrane. A helical membrane pass occupies residues 153–173 (AIMGVAFTWVMALACAAPPLV). At 174-202 (GWSRYIPEGMQCSCGIDYYTLKPEVNNES) the chain is on the extracellular side. Residue Glu201 coordinates Zn(2+). The helical transmembrane segment at 203 to 224 (FVIYMFVVHFTIPMTIIFFCYG) threads the bilayer. Over 225 to 252 (QLVFTVKEAAAQQQESATTQKAEKEVTR) the chain is Cytoplasmic. A helical transmembrane segment spans residues 253-274 (MVIIMVIAFLICWVPYASVAFY). Residues 275 to 286 (IFTHQGSDFGPI) lie on the Extracellular side of the membrane. Gln279 is a binding site for Zn(2+). Residues 287–308 (LMTLPAFFAKSSAIYNPVIYIM) traverse the membrane as a helical segment. Lys296 is subject to N6-(retinylidene)lysine. The Cytoplasmic segment spans residues 309-348 (MNKQFRNCMLTTICCGKNPFGEEEGSTTASKTETSQVAPA). 2 S-palmitoyl cysteine lipidation sites follow: Cys322 and Cys323. Positions 330-348 (EEEGSTTASKTETSQVAPA) are interaction with SAG. At Ser334 the chain carries Phosphoserine. Phosphothreonine is present on residues Thr335 and Thr336. The residue at position 338 (Ser338) is a Phosphoserine. Thr340 and Thr342 each carry phosphothreonine. A Phosphoserine modification is found at Ser343.

It belongs to the G-protein coupled receptor 1 family. Opsin subfamily. Homodimer. May form a complex composed of RHO, GRK1 and RCVRN in a Ca(2+)-dependent manner; RCVRN prevents the interaction between GRK1 and RHO. Interacts with GRK1. Interacts (phosphorylated form) with SAG. Interacts with GNAT1. Interacts with GNAT3. SAG and G-proteins compete for a common binding site. Interacts with PRCD; the interaction promotes PRCD stability. Forms a complex with ASAP1 and ARF4. Forms a complex with ASAP1, RAB11A, Rabin8/RAB3IP, ARF4 and RAB11FIP3; the complex regulates Golgi-to-cilia rhodopsin/RHO transport in photoreceptors. Phosphorylated on some or all of the serine and threonine residues present in the C-terminal region. Post-translationally, contains one covalently linked retinal chromophore. Upon light absorption, the covalently bound 11-cis-retinal is converted to all-trans-retinal. After hydrolysis of the Schiff base and release of the covalently bound all-trans-retinal, active rhodopsin is regenerated by binding of a fresh molecule of 11-cis-retinal.

It localises to the membrane. It is found in the cell projection. The protein resides in the cilium. The protein localises to the photoreceptor outer segment. Its function is as follows. Photoreceptor required for image-forming vision at low light intensity. Required for photoreceptor cell viability after birth. Light-induced isomerization of 11-cis to all-trans retinal triggers a conformational change that activates signaling via G-proteins. Subsequent receptor phosphorylation mediates displacement of the bound G-protein alpha subunit by the arrestin SAG and terminates signaling. The sequence is that of Rhodopsin (RHO) from Loxodonta africana (African elephant).